Reading from the N-terminus, the 270-residue chain is L-cystine-binding protein TcyK (270 aa).

The first 20 residues, 1-20 (MKTKTAFMAILFSLITVLSA), serve as a signal peptide directing secretion. Cys-21 carries the N-palmitoyl cysteine lipid modification. Residue Cys-21 is the site of S-diacylglycerol cysteine attachment.

The protein belongs to the bacterial solute-binding protein 3 family. The complex is composed of two ATP-binding proteins (TcyN), two transmembrane proteins (TcyL and TcyM) and two solute-binding proteins (TcyJ and TcyK).

The protein resides in the cell membrane. In terms of biological role, part of the ABC transporter complex TcyJKLMN involved in L-cystine import. Is also involved in cystathionine, djenkolate, and S-methylcysteine transport. This Bacillus subtilis (strain 168) protein is L-cystine-binding protein TcyK (tcyK).